A 110-amino-acid polypeptide reads, in one-letter code: Large ribosomal subunit protein uL22 (110 aa).

The protein belongs to the universal ribosomal protein uL22 family. Part of the 50S ribosomal subunit.

In terms of biological role, this protein binds specifically to 23S rRNA; its binding is stimulated by other ribosomal proteins, e.g. L4, L17, and L20. It is important during the early stages of 50S assembly. It makes multiple contacts with different domains of the 23S rRNA in the assembled 50S subunit and ribosome. Functionally, the globular domain of the protein is located near the polypeptide exit tunnel on the outside of the subunit, while an extended beta-hairpin is found that lines the wall of the exit tunnel in the center of the 70S ribosome. This Stutzerimonas stutzeri (strain A1501) (Pseudomonas stutzeri) protein is Large ribosomal subunit protein uL22.